The following is a 375-amino-acid chain: Erythronate-4-phosphate dehydrogenase (375 aa).

Substrate is bound by residues serine 45 and threonine 66. Residues aspartate 146 and threonine 175 each contribute to the NAD(+) site. The active site involves arginine 208. Aspartate 232 provides a ligand contact to NAD(+). Residue glutamate 237 is part of the active site. Catalysis depends on histidine 254, which acts as the Proton donor. Glycine 257 is a binding site for NAD(+). Tyrosine 258 provides a ligand contact to substrate.

It belongs to the D-isomer specific 2-hydroxyacid dehydrogenase family. PdxB subfamily. Homodimer.

Its subcellular location is the cytoplasm. It catalyses the reaction 4-phospho-D-erythronate + NAD(+) = (R)-3-hydroxy-2-oxo-4-phosphooxybutanoate + NADH + H(+). Its pathway is cofactor biosynthesis; pyridoxine 5'-phosphate biosynthesis; pyridoxine 5'-phosphate from D-erythrose 4-phosphate: step 2/5. Its function is as follows. Catalyzes the oxidation of erythronate-4-phosphate to 3-hydroxy-2-oxo-4-phosphonooxybutanoate. This chain is Erythronate-4-phosphate dehydrogenase, found in Yersinia enterocolitica serotype O:8 / biotype 1B (strain NCTC 13174 / 8081).